The primary structure comprises 318 residues: Very-long-chain 3-oxoacyl-CoA reductase-A (318 aa).

A helical transmembrane segment spans residues 15–35 (FWYLGVLAAAWWGLRAACCLL). An NADP(+)-binding site is contributed by 54-83 (GKWAVVTGATDGIGKAYAEELARRGMSIVL). Transmembrane regions (helical) follow at residues 187 to 207 (GVIL…LTVY) and 281 to 301 (AIMG…SMGM). Serine 194 is a binding site for substrate. The Proton acceptor role is filled by tyrosine 207.

Belongs to the short-chain dehydrogenases/reductases (SDR) family. 17-beta-HSD 3 subfamily.

The protein localises to the endoplasmic reticulum membrane. It catalyses the reaction a very-long-chain (3R)-3-hydroxyacyl-CoA + NADP(+) = a very-long-chain 3-oxoacyl-CoA + NADPH + H(+). The catalysed reaction is 17beta-estradiol + NAD(+) = estrone + NADH + H(+). The enzyme catalyses 17beta-estradiol + NADP(+) = estrone + NADPH + H(+). It participates in lipid metabolism; fatty acid biosynthesis. The protein operates within steroid biosynthesis; estrogen biosynthesis. Functionally, catalyzes the second of the four reactions of the long-chain fatty acids elongation cycle. This endoplasmic reticulum-bound enzymatic process, allows the addition of two carbons to the chain of long- and very long-chain fatty acids/VLCFAs per cycle. This enzyme has a 3-ketoacyl-CoA reductase activity, reducing 3-ketoacyl-CoA to 3-hydroxyacyl-CoA, within each cycle of fatty acid elongation. Thereby, it may participate in the production of VLCFAs of different chain lengths that are involved in multiple biological processes as precursors of membrane lipids and lipid mediators. May also catalyze the transformation of estrone (E1) into estradiol (E2) and play a role in estrogen formation. The sequence is that of Very-long-chain 3-oxoacyl-CoA reductase-A (hsd17b12-a) from Xenopus laevis (African clawed frog).